A 432-amino-acid polypeptide reads, in one-letter code: MYYCISFTYKNTDIALREKLSFSNETKKSEFLKIISTHENIEECLVISTCNRVEIVAFVKMACAEFIVKSLALLCDVDKDILLEKADIFEDSGAIHHLFSVASSLDSLVVGETQIAGQLKDAFAFAVKNSFCGVHLSRAVHSAFKCATKVRNETQISKKPISVASVAVAKAKELADLTQKKAVVIGAGEMGELAAKHLIAAGAKVIILNRDLQKAKDLCERLGVLSEYDSLENLKKYLNQYEFFFSATNAPNAIITNSLIEELPYKRYFFDIAVPRDIDINENENISVFAVDDLEIVVQKNLALREQEARMAYGIIGRETSEFFRYLNDLALMPIIKAIRLQAKEYADKQLEIALKKGYLKKSDKEEARKLIHQVFKAFLHMPTVNLKHLQGKMQSDTVINAMRYVFDLKNNLEGLNQYKCEFDMENNDEIY.

Residues 49–52 (TCNR), serine 107, 112–114 (ETQ), and glutamine 118 each bind substrate. The active-site Nucleophile is the cysteine 50. An NADP(+)-binding site is contributed by 186–191 (GAGEMG).

Belongs to the glutamyl-tRNA reductase family. Homodimer.

The enzyme catalyses (S)-4-amino-5-oxopentanoate + tRNA(Glu) + NADP(+) = L-glutamyl-tRNA(Glu) + NADPH + H(+). It functions in the pathway porphyrin-containing compound metabolism; protoporphyrin-IX biosynthesis; 5-aminolevulinate from L-glutamyl-tRNA(Glu): step 1/2. In terms of biological role, catalyzes the NADPH-dependent reduction of glutamyl-tRNA(Glu) to glutamate 1-semialdehyde (GSA). The protein is Glutamyl-tRNA reductase of Campylobacter jejuni subsp. doylei (strain ATCC BAA-1458 / RM4099 / 269.97).